A 146-amino-acid chain; its full sequence is MTLKLHDLRPARGSKTARTRVGRGDGSKGKTAGRGTKGTRARKQVPVTFEGGQMPIHMRLPKLKGFRNRFRTEYEIVNVGDINRLFPQGGAVGVDDLVAKGAVRKNALVKVLGDGKLTAKVDVSAHKFSGSARAKITAAGGSATEL.

The span at 1–10 shows a compositional bias: basic and acidic residues; that stretch reads MTLKLHDLRP. Residues 1–41 form a disordered region; it reads MTLKLHDLRPARGSKTARTRVGRGDGSKGKTAGRGTKGTRA.

This sequence belongs to the universal ribosomal protein uL15 family. Part of the 50S ribosomal subunit.

In terms of biological role, binds to the 23S rRNA. The sequence is that of Large ribosomal subunit protein uL15 from Mycobacterium bovis (strain BCG / Pasteur 1173P2).